The chain runs to 378 residues: Putative monoglyceride lipase (378 aa).

A GXSXG motif is present at residues 97–101; that stretch reads GHSMG. Ser-99 (nucleophile) is an active-site residue. Active-site charge relay system residues include Asp-219 and His-249. Residues 276–292 show a composition bias toward basic and acidic residues; that stretch reads PSETVKSEQETAVEHPK. The tract at residues 276 to 350 is disordered; the sequence is PSETVKSEQE…TSESTTVPET (75 aa). Over residues 293-305 the composition is skewed to low complexity; sequence PTATTSAPSASPT. Ser-301 bears the Phosphoserine mark. A compositionally biased stretch (polar residues) spans 341–350; the sequence is TSESTTVPET.

It belongs to the AB hydrolase superfamily. Monoacylglycerol lipase family.

The protein localises to the lipid droplet. Its subcellular location is the cytoplasm. It is found in the endoplasmic reticulum. The protein resides in the mitochondrion outer membrane. The catalysed reaction is Hydrolyzes glycerol monoesters of long-chain fatty acids.. It functions in the pathway glycerolipid metabolism; triacylglycerol degradation. Functionally, converts monoacylglycerides (MAG) to free fatty acids and glycerol. Has a strong preference for monounsaturated monoglycerides. Required for efficient degradation of MAG, short-lived intermediates of glycerolipid metabolism which may also function as lipid signaling molecules. Controls inactivation of the signaling lipid N-palmitoylethanolamine (PEA). Involved in fatty acid ethyl ester (FAEE) catabolism. FAEEs are non-oxidative metabolites of ethanol that are transiently incorporated into lipid droplets (LDs). Their mobilization by LD-resident FAEE hydrolases facilitates a controlled metabolism of these potentially toxic lipid metabolites. The protein is Putative monoglyceride lipase (mgl1) of Schizosaccharomyces pombe (strain 972 / ATCC 24843) (Fission yeast).